A 137-amino-acid chain; its full sequence is Phosphomevalonate dehydratase small subunit (137 aa).

Residue S62 is the Proton acceptor of the active site.

This sequence belongs to the AcnX type II small subunit family. Heterodimer composed of a large subunit (PMDh-L) and a small subunit (PMDh-S).

The catalysed reaction is (R)-5-phosphomevalonate = (2E)-3-methyl-5-phosphooxypent-2-enoate + H2O. It functions in the pathway isoprenoid biosynthesis; isopentenyl diphosphate biosynthesis via mevalonate pathway. In terms of biological role, component of a hydro-lyase that catalyzes the dehydration of mevalonate 5-phosphate (MVA5P) to form trans-anhydromevalonate 5-phosphate (tAHMP). Involved in the archaeal mevalonate (MVA) pathway, which provides fundamental precursors for isoprenoid biosynthesis, such as isopentenyl diphosphate (IPP) and dimethylallyl diphosphate (DMAPP). This chain is Phosphomevalonate dehydratase small subunit, found in Methanothrix thermoacetophila (strain DSM 6194 / JCM 14653 / NBRC 101360 / PT) (Methanosaeta thermophila).